The following is a 793-amino-acid chain: MDAFGIGSSLNQAPVTQDLKKFGDNSTGNTMFDASQYAFFGNDVVEEVELGGLEEEDEILSFTGIAEDFSFDKEEVGDSRLLSDVDDLASTFSKLNREPDVYSNTGPITDRRSSQNSLAAEWTHGEELPNWYGRQILDSDAIKDDKVWSAQPFSSLDRVEQRIPDRTKLYPEPQRQLHQDHNQQQFSSEPILVPKSSFVSYPPPGSISPDQRLGHPNIPYQSGGPQMGSPNFSPFPNLQPQLPSMHHGSPQHTGNRPQFRPALPLNNLPPAQWMNRQNMHPGDSSGIMNNAMLQQPPHQNGLMPPQMQGSQNRLPHPMQPPLGHMPGMQPQLFNSHLSRSSSSGNYDGMLGFGDLREVRPGSGHGNRQNVRFPQQGFDAGVQRRYPFRSKYMSAGEIENILRMQLVATHSNDPYVDDYYHQACLAKKSAGAKLKHHFCPNHLRDLQQRARSNNEPHAFLQVEALGRVPFSSIRRPRPLLEVDPPNSAKFGNAEHKPTDKPLDQEPMLAARVYIEDGLCLLLEVDDIDRFLEFNQLQDGGHQLKQRRQALLQSLAVSLQLGDPLAKNGQSQSLDDFLFLRVISLPKGRKLLIRYLQLIFPGSDLMRIVCMAIFRHLRSLFGVLSSDPDIIKTTNKLATVINLCIQNMELGPVSTCLAAVSCSSEQAPLRPLGSPVGDGASTVLKSILDRASELIRANNFNNAGIALWRASFNEFFNMLMRYCISKYDSIMQSLQLPPHFATEISEEAAKAIVREMPIELLRSSFPHIDEQQKRILMEFLKRSMLGSQKTEPVLS.

2 positions are modified to phosphoserine: S200 and S208. Disordered stretches follow at residues 203–256 (PPGS…TGNR) and 292–312 (MLQQPPHQNGLMPPQMQGSQN). A compositionally biased stretch (polar residues) spans 219 to 242 (PYQSGGPQMGSPNFSPFPNLQPQL). A phosphoserine mark is found at S342 and S343. Positions 476–501 (RPLLEVDPPNSAKFGNAEHKPTDKPL) are disordered. The span at 491 to 501 (NAEHKPTDKPL) shows a compositional bias: basic and acidic residues.

As to quaternary structure, interacts with MPK4 and SUMM2. In terms of processing, phosphorylated at Ser-208 by MPK4 upon flg22 elicitation. Phosphorylated at Ser-200, Ser-342 and Ser-343 upon flg22 elicitation.

The protein resides in the cytoplasm. Its subcellular location is the P-body. In terms of biological role, activator of mRNA decapping. Involved in mRNA decay via decapping. Involved in disease resistance in response to biotrophic and necrotrophic pathogens. Is part of a signaling pathway including MPK4 and the disease resistance protein SUMM2. This chain is Protein PAT1 homolog, found in Arabidopsis thaliana (Mouse-ear cress).